A 245-amino-acid polypeptide reads, in one-letter code: 1-(5-phosphoribosyl)-5-[(5-phosphoribosylamino)methylideneamino] imidazole-4-carboxamide isomerase (245 aa).

The active-site Proton acceptor is the Asp-11. Asp-132 functions as the Proton donor in the catalytic mechanism.

This sequence belongs to the HisA/HisF family.

It is found in the cytoplasm. It catalyses the reaction 1-(5-phospho-beta-D-ribosyl)-5-[(5-phospho-beta-D-ribosylamino)methylideneamino]imidazole-4-carboxamide = 5-[(5-phospho-1-deoxy-D-ribulos-1-ylimino)methylamino]-1-(5-phospho-beta-D-ribosyl)imidazole-4-carboxamide. The protein operates within amino-acid biosynthesis; L-histidine biosynthesis; L-histidine from 5-phospho-alpha-D-ribose 1-diphosphate: step 4/9. The sequence is that of 1-(5-phosphoribosyl)-5-[(5-phosphoribosylamino)methylideneamino] imidazole-4-carboxamide isomerase from Bacillus pumilus (strain SAFR-032).